The following is a 368-amino-acid chain: Alanine racemase (368 aa).

The active-site Proton acceptor; specific for D-alanine is K40. K40 carries the post-translational modification N6-(pyridoxal phosphate)lysine. Position 134 (R134) interacts with substrate. Y263 acts as the Proton acceptor; specific for L-alanine in catalysis. A substrate-binding site is contributed by M310.

This sequence belongs to the alanine racemase family. Requires pyridoxal 5'-phosphate as cofactor.

The enzyme catalyses L-alanine = D-alanine. It participates in amino-acid biosynthesis; D-alanine biosynthesis; D-alanine from L-alanine: step 1/1. Catalyzes the interconversion of L-alanine and D-alanine. May also act on other amino acids. This Listeria innocua serovar 6a (strain ATCC BAA-680 / CLIP 11262) protein is Alanine racemase (alr).